Here is a 528-residue protein sequence, read N- to C-terminus: Proteinaceous RNase P 2 (528 aa).

Positions 1 to 16 (MAASDQHRSRRHDESS) are enriched in basic and acidic residues. The tract at residues 1–28 (MAASDQHRSRRHDESSSRPNKKKKVSRN) is disordered. 4 PPR repeats span residues 29–64 (PETN…EVRL), 72–107 (LLYL…GISP), 108–142 (NEAS…GGVS), and 145–179 (RLRT…GIAL). Residues 275–511 (VSSTGRCLSC…NEESSRTWMC (237 aa)) form the PRORP domain. The Zn(2+) site is built by Cys-281 and Cys-284. Asp-343, Asp-421, Asp-422, and Asp-440 together coordinate Mg(2+). The Zn(2+) site is built by His-494 and Cys-511.

The protein belongs to the PPR family. P subfamily. In terms of assembly, monomer; forms dimers in crystallo but monomers in solution. Mg(2+) serves as cofactor.

Its subcellular location is the nucleus. The enzyme catalyses Endonucleolytic cleavage of RNA, removing 5'-extranucleotides from tRNA precursor.. Endonuclease RNase P responsible for the 5' maturation of tRNA precursors. Preferentially binds precursor tRNAs containing short 5' leaders and 3' trailers. Also involved in the maturation of mRNA and small nucleolar RNA (snoRNA). The chain is Proteinaceous RNase P 2 (PRORP2) from Arabidopsis thaliana (Mouse-ear cress).